The chain runs to 230 residues: MAMDLLRHRLGRIDYLPAYEAMQVFTAARTPETPDELWICEHPPVYTQGLAGKAEHVFNPGTIPVVQTNRGGQVTYHGPGQVVAYPLLDLKRAGYFIKEYVYRIEEAVIRTLVEFGVTGHRVAGAPGIYVRLDDPGSHALLPQRPMKSGLANPSFGGLGKIAALGLKVSRNCTYHGVALNVAMDLEPYTRINPCGYAGLQTVDLSTIGVCAGWDEVAELLGDKLTRYLAP.

The 200-residue stretch at 31 to 230 (PETPDELWIC…GDKLTRYLAP (200 aa)) folds into the BPL/LPL catalytic domain. Substrate contacts are provided by residues 70 to 77 (RGGQVTYH), 163 to 165 (ALG), and 176 to 178 (GVA). Cys194 (acyl-thioester intermediate) is an active-site residue.

Belongs to the LipB family.

The protein localises to the cytoplasm. It carries out the reaction octanoyl-[ACP] + L-lysyl-[protein] = N(6)-octanoyl-L-lysyl-[protein] + holo-[ACP] + H(+). It participates in protein modification; protein lipoylation via endogenous pathway; protein N(6)-(lipoyl)lysine from octanoyl-[acyl-carrier-protein]: step 1/2. In terms of biological role, catalyzes the transfer of endogenously produced octanoic acid from octanoyl-acyl-carrier-protein onto the lipoyl domains of lipoate-dependent enzymes. Lipoyl-ACP can also act as a substrate although octanoyl-ACP is likely to be the physiological substrate. The chain is Octanoyltransferase from Albidiferax ferrireducens (strain ATCC BAA-621 / DSM 15236 / T118) (Rhodoferax ferrireducens).